We begin with the raw amino-acid sequence, 534 residues long: Low affinity inorganic phosphate transporter 1 (534 aa).

Residues 1 to 23 (MAKDLQVLTALDVAKTQLYHFTA) lie on the Cytoplasmic side of the membrane. Residues 24–44 (IVIAGMGFFTDAYDLFCISLV) traverse the membrane as a helical segment. The Extracellular segment spans residues 45 to 69 (TKLLGRIYYHHEGALKPGSLPPNVA). Residues 70–90 (AAVNGVAFCGTLAGQLFFGWL) traverse the membrane as a helical segment. The Cytoplasmic portion of the chain corresponds to 91–98 (GDKLGRKK). The helical transmembrane segment at 99–119 (VYGMTLMLMVICSIASGLSFG) threads the bilayer. Topologically, residues 120-124 (HTPKS) are extracellular. A helical membrane pass occupies residues 125–145 (VMATLCFFRFWLGFGIGGDYP). The Cytoplasmic segment spans residues 146-163 (LSATIMSEYANKKTRGAF). The helical transmembrane segment at 164–184 (IAAVFAMQGFGILAGGMVAII) threads the bilayer. Residues 185–210 (VSAAFKNQFPAPAYKDGALASTISQA) lie on the Extracellular side of the membrane. A helical transmembrane segment spans residues 211 to 231 (DFVWRIIVMFGAIPTALTYYW). Residues 232 to 290 (RMKMPETARYTALVAKNLKQATNDMSKVLQVEIEPEQEKVEEISQGNDFGLFTKQFLRR) lie on the Cytoplasmic side of the membrane. Residues 291-311 (HGLHLLGTASTWFLLDIAFYS) traverse the membrane as a helical segment. The Extracellular segment spans residues 312 to 343 (QNLFQKDIFSAIGWIPPAETMNALEEVYRIAR). Residues 344–364 (AQTLIALCSTVPGYWFTVAFI) traverse the membrane as a helical segment. Topologically, residues 365 to 369 (DKIGR) are cytoplasmic. A helical transmembrane segment spans residues 370 to 390 (FAIQLMGFFFMTVFMFALAIP). At 391 to 400 (YTHWTHKDNR) the chain is on the extracellular side. Residues 401 to 421 (IGFVIMYSLTFFFANFGPNAT) form a helical membrane-spanning segment. The Cytoplasmic segment spans residues 422-440 (TFVVPAEIFPARLRSTCHG). The helical transmembrane segment at 441–461 (ISAAAGKAGAMVGAFGFLYAA) threads the bilayer. At 462–481 (QSTDPKKTDAGYPAGIGVRN) the chain is on the extracellular side. A helical membrane pass occupies residues 482 to 502 (SLIVLGCVNFLGMLFTLLVPE). Residues 503-534 (SKGKSLEEMSRENEGEDENGTEMRASGRTVPV) are Cytoplasmic-facing. The interval 507 to 534 (SLEEMSRENEGEDENGTEMRASGRTVPV) is disordered.

It belongs to the major facilitator superfamily. Phosphate:H(+) symporter (TC 2.A.1.9) family.

It localises to the cell membrane. The catalysed reaction is phosphate(in) + H(+)(in) = phosphate(out) + H(+)(out). Functionally, low-affinity transporter for external inorganic phosphate (Pi). Involved in phosphorus (P) remobilization from dying to developing tissues during corolla senescence in an ethylene-dependent manner. This is Low affinity inorganic phosphate transporter 1 from Petunia hybrida (Petunia).